The sequence spans 175 residues: Disulfide bond formation protein B (175 aa).

The Cytoplasmic segment spans residues 1-13 (MTAFTRFAHSRAS). A helical transmembrane segment spans residues 14-30 (WFILTGSAIALEAAALY). Residues 31–48 (FQYVMKLDPCVMCIYQRL) lie on the Periplasmic side of the membrane. An intrachain disulfide couples Cys40 to Cys43. The chain crosses the membrane as a helical span at residues 49 to 64 (AVFGILASGLIGMTAP). The Cytoplasmic segment spans residues 65–71 (KFLIVRI). A helical transmembrane segment spans residues 72 to 89 (LGAIGWAVSATWGLKLAL). Over 90–144 (ALVDMQNNPSPFSTCSFLPEFPAWMPLHEWFPSVMLPTGMCTDVPWQFMGVTMAE) the chain is Periplasmic. Cysteines 104 and 130 form a disulfide. Residues 145–163 (WMVVAFSGYLVALLLFIVP) traverse the membrane as a helical segment. The Cytoplasmic portion of the chain corresponds to 164–175 (ILSGSNKPSLYK).

Belongs to the DsbB family.

Its subcellular location is the cell inner membrane. Required for disulfide bond formation in some periplasmic proteins. Acts by oxidizing the DsbA protein. The polypeptide is Disulfide bond formation protein B (Shewanella sp. (strain ANA-3)).